The following is a 297-amino-acid chain: Light-independent protochlorophyllide reductase iron-sulfur ATP-binding protein (297 aa).

ATP-binding positions include 41–46 (GIGKST) and lysine 70. Serine 45 is a Mg(2+) binding site. Residues cysteine 126 and cysteine 160 each contribute to the [4Fe-4S] cluster site. ATP contacts are provided by residues 211 to 212 (NR) and 235 to 237 (PDL).

Belongs to the NifH/BchL/ChlL family. As to quaternary structure, homodimer. Protochlorophyllide reductase is composed of three subunits; BchL, BchN and BchB. [4Fe-4S] cluster is required as a cofactor.

It carries out the reaction chlorophyllide a + oxidized 2[4Fe-4S]-[ferredoxin] + 2 ADP + 2 phosphate = protochlorophyllide a + reduced 2[4Fe-4S]-[ferredoxin] + 2 ATP + 2 H2O. Its pathway is porphyrin-containing compound metabolism; bacteriochlorophyll biosynthesis (light-independent). Component of the dark-operative protochlorophyllide reductase (DPOR) that uses Mg-ATP and reduced ferredoxin to reduce ring D of protochlorophyllide (Pchlide) to form chlorophyllide a (Chlide). This reaction is light-independent. The L component serves as a unique electron donor to the NB-component of the complex, and binds Mg-ATP. The polypeptide is Light-independent protochlorophyllide reductase iron-sulfur ATP-binding protein (Methylobacterium radiotolerans (strain ATCC 27329 / DSM 1819 / JCM 2831 / NBRC 15690 / NCIMB 10815 / 0-1)).